The sequence spans 599 residues: Elongation factor 4 (599 aa).

A tr-type G domain is found at 2-184; it reads KNIRNFSIIA…RLVRDIPPPQ (183 aa). Residues 14-19 and 131-134 contribute to the GTP site; these read DHGKST and NKID.

It belongs to the TRAFAC class translation factor GTPase superfamily. Classic translation factor GTPase family. LepA subfamily.

It localises to the cell inner membrane. The catalysed reaction is GTP + H2O = GDP + phosphate + H(+). Functionally, required for accurate and efficient protein synthesis under certain stress conditions. May act as a fidelity factor of the translation reaction, by catalyzing a one-codon backward translocation of tRNAs on improperly translocated ribosomes. Back-translocation proceeds from a post-translocation (POST) complex to a pre-translocation (PRE) complex, thus giving elongation factor G a second chance to translocate the tRNAs correctly. Binds to ribosomes in a GTP-dependent manner. This is Elongation factor 4 from Salmonella agona (strain SL483).